Reading from the N-terminus, the 2210-residue chain is RNA-directed RNA polymerase L (2210 aa).

The tract at residues Arg-26 to Cys-284 is endonuclease. Mn(2+) contacts are provided by Glu-51, Asp-89, and Glu-102. Lys-115 is an active-site residue. The region spanning Cys-1171–Ile-1368 is the RdRp catalytic domain. Asp-1329 is a Mg(2+) binding site.

It belongs to the Bunyavirales RNA polymerase family. Homomultimer; the oligomeric structure is essential for the polymerase activity. Interacts with nucleoprotein N. Interacts with protein Z; this interaction inhibits viral transcription and replication, Z partially blocks the product exit tunnel for the releasing nascent RNA product. Mn(2+) is required as a cofactor. Requires Mg(2+) as cofactor.

It is found in the virion. It localises to the host cytoplasm. The catalysed reaction is RNA(n) + a ribonucleoside 5'-triphosphate = RNA(n+1) + diphosphate. In terms of biological role, RNA-dependent RNA polymerase, which is responsible for the replication and transcription of the viral RNA genome using antigenomic RNA as an intermediate. During transcription, synthesizes subgenomic RNAs and assures their capping by a cap-snatching mechanism, which involves the endonuclease activity cleaving the host capped pre-mRNAs. These short capped RNAs are then used as primers for viral transcription. The 3'-end of subgenomic mRNAs molecules are heterogeneous and not polyadenylated. The replicase function is to direct synthesis of antigenomic and genomic RNA which are encapsidated and non capped. As a consequence of the use of the same enzyme for both transcription and replication, these mechanisms need to be well coordinated. These processes may be regulated by proteins N and Z in a dose-dependent manner. Z protein inhibits the viral polymerase L und thus the viral transcription and RNA synthesis. This is RNA-directed RNA polymerase L from Junin mammarenavirus (JUNV).